Reading from the N-terminus, the 276-residue chain is MGDNRNLPVTQPNSINFNVVILSIFFSGSFIGAWAFFNRFLKQYTKATEIPQNVFRKRWLFGKVTAVGDGDNFHFFHAPGGLIAGWGWLRPLPELNKSDPPISSSKVGSSVPIHRRIFDSIFGRNKTRTAYSNYFLGLPVPYKNKRNLPTISIRICGVDAPERAHFGNPAQPFSEEALIWLRHTLIGKCVWIKPLAVDQYNRCVAKVEYWTWTGWKNVSLEMVKQGLAVVYESKTSAEFDGEEDKYRFHEMAAKARRRGIWSQKQFETPGEYKRRI.

The chain crosses the membrane as a helical span at residues 17 to 37 (FNVVILSIFFSGSFIGAWAFF). One can recognise a TNase-like domain in the interval 58 to 263 (RWLFGKVTAV…KARRRGIWSQ (206 aa)). Residue R154 is part of the active site. D159 lines the Ca(2+) pocket. Active-site residues include E162 and R202.

This sequence belongs to the LCL3 family.

It is found in the mitochondrion. The protein resides in the membrane. This Zygosaccharomyces rouxii (strain ATCC 2623 / CBS 732 / NBRC 1130 / NCYC 568 / NRRL Y-229) protein is Probable endonuclease LCL3 (LCL3).